Consider the following 136-residue polypeptide: DNA-directed RNA polymerase subunit omega (136 aa).

It belongs to the RNA polymerase subunit omega family. The RNAP catalytic core consists of 2 alpha, 1 beta, 1 beta' and 1 omega subunit. When a sigma factor is associated with the core the holoenzyme is formed, which can initiate transcription.

The enzyme catalyses RNA(n) + a ribonucleoside 5'-triphosphate = RNA(n+1) + diphosphate. Promotes RNA polymerase assembly. Latches the N- and C-terminal regions of the beta' subunit thereby facilitating its interaction with the beta and alpha subunits. The protein is DNA-directed RNA polymerase subunit omega of Methylorubrum extorquens (strain CM4 / NCIMB 13688) (Methylobacterium extorquens).